The chain runs to 426 residues: S-adenosylmethionine synthase (426 aa).

Histidine 22 is an ATP binding site. Aspartate 24 serves as a coordination point for Mg(2+). Glutamate 50 lines the K(+) pocket. Residues glutamate 63 and glutamine 106 each contribute to the L-methionine site. The interval 106–116 (QSPDISQGVTA) is flexible loop. ATP-binding positions include 181–183 (DGK), 257–258 (KF), aspartate 266, 272–273 (RK), alanine 289, and lysine 293. L-methionine is bound at residue aspartate 266. Lysine 297 is a binding site for L-methionine.

It belongs to the AdoMet synthase family. In terms of assembly, homotetramer; dimer of dimers. Requires Mg(2+) as cofactor. The cofactor is K(+).

The protein resides in the cytoplasm. The catalysed reaction is L-methionine + ATP + H2O = S-adenosyl-L-methionine + phosphate + diphosphate. Its pathway is amino-acid biosynthesis; S-adenosyl-L-methionine biosynthesis; S-adenosyl-L-methionine from L-methionine: step 1/1. In terms of biological role, catalyzes the formation of S-adenosylmethionine (AdoMet) from methionine and ATP. The overall synthetic reaction is composed of two sequential steps, AdoMet formation and the subsequent tripolyphosphate hydrolysis which occurs prior to release of AdoMet from the enzyme. The chain is S-adenosylmethionine synthase from Synechocystis sp. (strain ATCC 27184 / PCC 6803 / Kazusa).